A 412-amino-acid chain; its full sequence is Divalent metal cation transporter MntH (412 aa).

The Cytoplasmic portion of the chain corresponds to 1–19; the sequence is MTNYRVESSSGRAARKTRL. The chain crosses the membrane as a helical span at residues 20-39; sequence ALMGPAFIAAIGYIDPGNFA. At 40–51 the chain is on the periplasmic side; it reads TNIQAGASFGYQ. The chain crosses the membrane as a helical span at residues 52-71; it reads LLWVVVWANLMAMLIQILSA. Over 72–95 the chain is Cytoplasmic; that stretch reads KLGIATGKNLAEQIRDHYPRPVVW. Residues 96–118 traverse the membrane as a helical segment; the sequence is FYWVQAEIIAMATDLAEFIGAAI. The Periplasmic segment spans residues 119–125; it reads GFKLILG. Residues 126–145 form a helical membrane-spanning segment; it reads VSLLQGAVLTGIATFLILML. Topologically, residues 146–155 are cytoplasmic; that stretch reads QRRGQKPLEK. Residues 156-175 traverse the membrane as a helical segment; sequence VIGGLLLFVAAAYIVELIFS. The Periplasmic portion of the chain corresponds to 176-196; it reads QPNLAQLGKGMVIPSLPTSEA. A helical membrane pass occupies residues 197–220; sequence VFLAAGVLGATIMPHVIYLHSSLT. Residues 221–238 lie on the Cytoplasmic side of the membrane; sequence QHLHGGSRQQRYSATKWD. Residues 239–258 form a helical membrane-spanning segment; that stretch reads VAIAMTIAGFVNLAMMATAA. Residues 259 to 276 lie on the Periplasmic side of the membrane; sequence AAFHFSGHTGVADLDEAY. A helical transmembrane segment spans residues 277-297; that stretch reads LTLQPLLSHAAATVFGLSLVA. Residues 298–327 lie on the Cytoplasmic side of the membrane; the sequence is AGLSSTVVGTLAGQVVMQGFIRFHIPLWVR. Residues 328-344 form a helical membrane-spanning segment; sequence RTVTMLPSFIVILMGLD. The Periplasmic portion of the chain corresponds to 345–350; the sequence is PTRILV. A helical transmembrane segment spans residues 351–370; it reads MSQVLLSFGIALALVPLLIF. The Cytoplasmic portion of the chain corresponds to 371–387; that stretch reads TSDSKLMGDLVNSKRVK. The helical transmembrane segment at 388–406 threads the bilayer; sequence QTGWVIVVLVVALNIWLLV. Topologically, residues 407–412 are periplasmic; the sequence is GTALGL.

The protein belongs to the NRAMP family.

The protein localises to the cell inner membrane. In terms of biological role, h(+)-stimulated, divalent metal cation uptake system. This Escherichia coli O9:H4 (strain HS) protein is Divalent metal cation transporter MntH.